The sequence spans 261 residues: 5'-nucleotidase SurE (261 aa).

Residues Asp8, Asp9, Ser43, and Asn96 each coordinate a divalent metal cation.

This sequence belongs to the SurE nucleotidase family. A divalent metal cation is required as a cofactor.

Its subcellular location is the cytoplasm. It catalyses the reaction a ribonucleoside 5'-phosphate + H2O = a ribonucleoside + phosphate. Nucleotidase that shows phosphatase activity on nucleoside 5'-monophosphates. The protein is 5'-nucleotidase SurE of Dinoroseobacter shibae (strain DSM 16493 / NCIMB 14021 / DFL 12).